The following is a 216-amino-acid chain: Pyridoxine/pyridoxamine 5'-phosphate oxidase (216 aa).

Residues 12–15 (RREY) and Lys70 contribute to the substrate site. Residues 65-70 (RLVLLK), 80-81 (YT), Arg86, Lys87, and Gln109 contribute to the FMN site. Substrate-binding residues include Tyr127, Arg131, and Ser135. Residues 144 to 145 (QS) and Trp189 each bind FMN. 195 to 197 (RLH) serves as a coordination point for substrate. Residue Arg199 coordinates FMN.

It belongs to the pyridoxamine 5'-phosphate oxidase family. In terms of assembly, homodimer. FMN is required as a cofactor.

It catalyses the reaction pyridoxamine 5'-phosphate + O2 + H2O = pyridoxal 5'-phosphate + H2O2 + NH4(+). The catalysed reaction is pyridoxine 5'-phosphate + O2 = pyridoxal 5'-phosphate + H2O2. It participates in cofactor metabolism; pyridoxal 5'-phosphate salvage; pyridoxal 5'-phosphate from pyridoxamine 5'-phosphate: step 1/1. The protein operates within cofactor metabolism; pyridoxal 5'-phosphate salvage; pyridoxal 5'-phosphate from pyridoxine 5'-phosphate: step 1/1. Its function is as follows. Catalyzes the oxidation of either pyridoxine 5'-phosphate (PNP) or pyridoxamine 5'-phosphate (PMP) into pyridoxal 5'-phosphate (PLP). In Baumannia cicadellinicola subsp. Homalodisca coagulata, this protein is Pyridoxine/pyridoxamine 5'-phosphate oxidase.